We begin with the raw amino-acid sequence, 601 residues long: Deuterosome assembly protein 1 (601 aa).

Coiled coils occupy residues 14–59 (CEAE…NAQT), 86–196 (TQNY…GKKQ), and 226–277 (IEKL…ELQS). The disordered stretch occupies residues 305-329 (AQDNRKRVESSYSPSPKEAERKRKE). The stretch at 354–397 (EEGLCSEQERLRSEISELTQELHQKEVTIATVMKKAALLERQLK) forms a coiled coil. Serine 544 carries the post-translational modification Phosphoserine. Positions 555–586 (AAQHFLMEEERRAKELEKLLNTHIDELQRHTE) form a coiled coil.

Belongs to the CEP63 family. As to quaternary structure, interacts with CEP152; the interaction is mutually exclusive with CEP63. In terms of tissue distribution, highly enriched in multicilia-abundant tissues (trachea and oviduct).

The protein resides in the cytoplasm. Key structural component of the deuterosome, a structure that promotes de novo centriole amplification in multiciliated cells. Deuterosome-mediated centriole amplification occurs in terminally differentiated multiciliated cells and can generate more than 100 centrioles. Probably sufficient for the specification and formation of the deuterosome inner core. Interacts with CEP152 and recruits PLK4 to activate centriole biogenesis. The polypeptide is Deuterosome assembly protein 1 (Mus musculus (Mouse)).